A 369-amino-acid polypeptide reads, in one-letter code: Ubiquinone biosynthesis O-methyltransferase, mitochondrial (369 aa).

The N-terminal 85 residues, Met-1–Tyr-85, are a transit peptide targeting the mitochondrion. Arg-124 is an S-adenosyl-L-methionine binding site. Residues Lys-143 and Lys-149 each carry the N6-acetyllysine modification. S-adenosyl-L-methionine is bound by residues Gly-154 and Asp-175. At Lys-196 the chain carries N6-acetyllysine. Ser-222 is an S-adenosyl-L-methionine binding site. The Mg(2+) site is built by Glu-223, Glu-226, and His-227.

It belongs to the class I-like SAM-binding methyltransferase superfamily. UbiG/COQ3 family. As to quaternary structure, component of a multi-subunit COQ enzyme complex, composed of at least COQ3, COQ4, COQ5, COQ6, COQ7 and COQ9. The cofactor is Mg(2+).

It localises to the mitochondrion inner membrane. It carries out the reaction 3,4-dihydroxy-5-(all-trans-decaprenyl)benzoate + S-adenosyl-L-methionine = 4-hydroxy-3-methoxy-5-(all-trans-decaprenyl)benzoate + S-adenosyl-L-homocysteine + H(+). The enzyme catalyses a 3-demethylubiquinone + S-adenosyl-L-methionine = a ubiquinone + S-adenosyl-L-homocysteine. The catalysed reaction is 3-demethylubiquinol-10 + S-adenosyl-L-methionine = ubiquinol-10 + S-adenosyl-L-homocysteine + H(+). The protein operates within cofactor biosynthesis; ubiquinone biosynthesis. In terms of biological role, O-methyltransferase required for two non-consecutive steps during ubiquinone biosynthesis. Catalyzes the 2 O-methylation of 3,4-dihydroxy-5-(all-trans-decaprenyl)benzoic acid into 4-hydroxy-3-methoxy-5-(all-trans-decaprenyl)benzoic acid. Also catalyzes the last step of ubiquinone biosynthesis by mediating methylation of 3-demethylubiquinone into ubiquinone. Also able to mediate the methylation of 3-demethylubiquinol-10 into ubiquinol-10. The protein is Ubiquinone biosynthesis O-methyltransferase, mitochondrial of Homo sapiens (Human).